Reading from the N-terminus, the 1057-residue chain is Desmoglein-1-alpha (1057 aa).

Residues 1 to 23 (MDWHSFRIAALLLTSLVVLEVNS) form the signal peptide. Positions 24–49 (EFQIQVRDHNAKNGTIKWHSIRRQKR) are excised as a propeptide. 4 consecutive Cadherin domains span residues 50-157 (EWIK…PPVF), 158-269 (SMTT…IPYL), 270-389 (EQSS…RPGS), and 386-493 (RPGS…TGSE). Topologically, residues 50–564 (EWIKFAAACR…LYGDNVHFGP (515 aa)) are extracellular. 2 N-linked (GlcNAc...) asparagine glycosylation sites follow: N110 and N180. Residues 490–552 (TGSESGGSSS…FQGDPDETLE (63 aa)) are disordered. Residues 510 to 525 (NGYQGTSSTENPQRVT) are compositionally biased toward polar residues. A helical transmembrane segment spans residues 565 to 585 (AGIGLLIMGFLVLGLVPFLLI). Over 586 to 1057 (CCDCGGAPGG…TKYNTVQYSK (472 aa)) the chain is Cytoplasmic. Desmoglein repeat repeat units follow at residues 832–858 (AYHS…TVRE), 859–888 (SYTT…ERVV), 889–918 (GPIS…ERVI), 919–946 (APGS…ERVI), and 947–975 (QPTS…ERVV).

In terms of assembly, binds to JUP/plakoglobin. Interacts with PKP2. Interacts with DSC3; there is evidence to suggest that the interaction promotes cell-cell adhesion of keratinocytes. As to expression, expressed in testis.

It localises to the cell membrane. The protein localises to the cell junction. The protein resides in the desmosome. Its subcellular location is the cytoplasm. It is found in the nucleus. Component of intercellular desmosome junctions. Involved in the interaction of plaque proteins and intermediate filaments mediating cell-cell adhesion. The polypeptide is Desmoglein-1-alpha (Dsg1a) (Mus musculus (Mouse)).